The primary structure comprises 239 residues: Alpha-acetolactate decarboxylase (239 aa).

The protein belongs to the alpha-acetolactate decarboxylase family.

The catalysed reaction is (2S)-2-acetolactate + H(+) = (R)-acetoin + CO2. The protein operates within polyol metabolism; (R,R)-butane-2,3-diol biosynthesis; (R,R)-butane-2,3-diol from pyruvate: step 2/3. Its activity is regulated as follows. The enzyme is active only in the presence of branched-chain amino acids. Valine results in much higher activation than leucine or isoleucine. In terms of biological role, converts acetolactate into acetoin. Regulates leucine and valine biosynthesis by diverting the flux of alpha-acetolactate towards acetoin when the branched-chain amino acids are present in high concentration. The polypeptide is Alpha-acetolactate decarboxylase (aldC) (Streptococcus thermophilus).